A 467-amino-acid chain; its full sequence is Regulator of nonsense transcripts 3B (467 aa).

Disordered stretches follow at residues 1 to 30 (MKED…KPCK) and 197 to 467 (REEK…KAAE). 2 stretches are compositionally biased toward basic and acidic residues: residues 197–389 (REEK…EHTG) and 396–421 (RPEK…KDRP). Residues 435-447 (RGGGGGGGTGGDG) are compositionally biased toward gly residues. Residues 449 to 467 (AAEKRAEREAKKNQEKAAE) are compositionally biased toward basic and acidic residues.

The protein belongs to the RENT3 family.

The protein localises to the nucleus. It is found in the cytoplasm. Functionally, involved in nonsense-mediated decay (NMD) of mRNAs containing premature stop codons by associating with the nuclear exon junction complex (EJC) and serving as link between the EJC core and NMD machinery. Recruits UPF2 at the cytoplasmic side of the nuclear envelope and the subsequent formation of an UPF1-UPF2-UPF3 surveillance complex (including UPF1 bound to release factors at the stalled ribosome) is believed to activate NMD. In cooperation with UPF2 stimulates both ATPase and RNA helicase activities of UPF1. Binds spliced mRNA upstream of exon-exon junctions. The polypeptide is Regulator of nonsense transcripts 3B (Danio rerio (Zebrafish)).